A 345-amino-acid polypeptide reads, in one-letter code: Ferredoxin--NADP reductase (345 aa).

The FAD site is built by aspartate 38, glutamine 46, tyrosine 51, valine 91, phenylalanine 129, aspartate 295, and threonine 336.

Belongs to the ferredoxin--NADP reductase type 2 family. As to quaternary structure, homodimer. It depends on FAD as a cofactor.

The catalysed reaction is 2 reduced [2Fe-2S]-[ferredoxin] + NADP(+) + H(+) = 2 oxidized [2Fe-2S]-[ferredoxin] + NADPH. This is Ferredoxin--NADP reductase from Rhodospirillum rubrum (strain ATCC 11170 / ATH 1.1.1 / DSM 467 / LMG 4362 / NCIMB 8255 / S1).